A 159-amino-acid chain; its full sequence is Ribosomal RNA large subunit methyltransferase H (159 aa).

Leu76 and Gly108 together coordinate S-adenosyl-L-methionine.

Belongs to the RNA methyltransferase RlmH family. In terms of assembly, homodimer.

The protein localises to the cytoplasm. The catalysed reaction is pseudouridine(1915) in 23S rRNA + S-adenosyl-L-methionine = N(3)-methylpseudouridine(1915) in 23S rRNA + S-adenosyl-L-homocysteine + H(+). In terms of biological role, specifically methylates the pseudouridine at position 1915 (m3Psi1915) in 23S rRNA. The chain is Ribosomal RNA large subunit methyltransferase H from Pediococcus pentosaceus (strain ATCC 25745 / CCUG 21536 / LMG 10740 / 183-1w).